A 50-amino-acid chain; its full sequence is MQTLSSAPDPAVSIAVTILALLLALTGFGLWTAFGPKAAKLTDPWDDHDD.

The helical transmembrane segment at 14-34 threads the bilayer; sequence IAVTILALLLALTGFGLWTAF.

The protein belongs to the PsbN family.

Its subcellular location is the cellular thylakoid membrane. Its function is as follows. May play a role in photosystem I and II biogenesis. This chain is Protein PsbN, found in Prochlorococcus marinus (strain MIT 9301).